Consider the following 596-residue polypeptide: Elongation factor 4 (596 aa).

The tr-type G domain occupies 2–183 (ENIRNFCIIA…AIIQRIPPPK (182 aa)). Residues 14–19 (DHGKST) and 130–133 (NKID) each bind GTP.

The protein belongs to the TRAFAC class translation factor GTPase superfamily. Classic translation factor GTPase family. LepA subfamily.

It is found in the cell inner membrane. It catalyses the reaction GTP + H2O = GDP + phosphate + H(+). Functionally, required for accurate and efficient protein synthesis under certain stress conditions. May act as a fidelity factor of the translation reaction, by catalyzing a one-codon backward translocation of tRNAs on improperly translocated ribosomes. Back-translocation proceeds from a post-translocation (POST) complex to a pre-translocation (PRE) complex, thus giving elongation factor G a second chance to translocate the tRNAs correctly. Binds to ribosomes in a GTP-dependent manner. This chain is Elongation factor 4, found in Cytophaga hutchinsonii (strain ATCC 33406 / DSM 1761 / CIP 103989 / NBRC 15051 / NCIMB 9469 / D465).